The chain runs to 1724 residues: Protein mono-ADP-ribosyltransferase PARP4 (1724 aa).

Residues 1 to 94 (MVMGIFANCI…RLLDVKNYDP (94 aa)) form the BRCT domain. The Nuclear localization signal signature appears at 19 to 25 (PQQQKKK). A disordered region spans residues 97–123 (PLDITPPPDQKASSSEVKTEGLCPDSA). T101 and T333 each carry phosphothreonine. The 129-residue stretch at 242 to 370 (SEQLQALLLE…ETNLSKPNPP (129 aa)) folds into the PARP alpha-helical domain. Residues 369-573 (PPSLAKYRAL…FSMPGDQIKD (205 aa)) form the PARP catalytic domain. The region spanning 607–735 (SSTKAGLQDA…KVLIKITYIT (129 aa)) is the VIT domain. In terms of domain architecture, VWFA spans 876-1046 (EVIICLDCSS…KQIEDQMTRL (171 aa)). S1236 is modified (phosphoserine). The short motif at 1237–1249 (KRKHRKIPFSKRK) is the Nuclear localization signal element. S1335 carries the post-translational modification Phosphoserine. The interval 1408 to 1452 (SAQSAPLQHPGGFTTRPSAGTFPELDSPQLHFSLPTDPDPIRGFG) is disordered. An Asymmetric dimethylarginine modification is found at R1476. Position 1504 is a phosphoserine (S1504). Residues 1562–1724 (VCIQHWQDAV…LHRVLHYSQG (163 aa)) are interaction with the major vault protein.

This sequence belongs to the ARTD/PARP family. As to quaternary structure, component of the vault ribonucleoprotein particle, at least composed of MVP, PARP4 and one or more vault RNAs (vRNAs). Interacts with TEP1. As to expression, widely expressed; the highest levels are in the kidney; also detected in heart, placenta, lung, liver, skeletal muscle, spleen, leukocytes and pancreas.

It is found in the cytoplasm. The protein localises to the nucleus. The protein resides in the cytoskeleton. It localises to the spindle. It catalyses the reaction L-aspartyl-[protein] + NAD(+) = 4-O-(ADP-D-ribosyl)-L-aspartyl-[protein] + nicotinamide. The enzyme catalyses L-glutamyl-[protein] + NAD(+) = 5-O-(ADP-D-ribosyl)-L-glutamyl-[protein] + nicotinamide. Its function is as follows. Mono-ADP-ribosyltransferase that mediates mono-ADP-ribosylation of target proteins. This Homo sapiens (Human) protein is Protein mono-ADP-ribosyltransferase PARP4.